Here is a 941-residue protein sequence, read N- to C-terminus: MWTEEAGATAEAQESGIRNKSSSSSQIPVVGVVTEDDEAQDVFKPMDLNRVIKLLEETDKDGLEEKQLKFVKKLVQCYQNGLPLRDLAQIFKILNLCSGKIKNQPRFIESAYDIIKLCGLPFLKKKVSDEITYAEDTANSIALLGDLMKIPSSELRIQICKCIVDFYHAEPPKKHIPGYQQASSSYKIQMAEVGGLAKTMVQSMTLLENQLVEKLWVLKVLQHLSTSEVNCTIMMKAQAASGICTHLNDPDPSGQLLFRSSEILWNLLEKSSKEEVIQQLSNLECLLALKEVFKNLFMRGFSHYDRQLRNDILVITTIIAQNPEAPMIECGFTKDLILFATFNEVKSQNLLVKGLKLSNSYEDFELKKLLFNVIVILCKDLPTVQLLIDGKVILALFTYVKKPEKQKIIDWSAAQHEELQLHAIATLSSVAPLLIEEYMSCQGNARVLAFLEWCESEDPFFSHGNSFHGTGGRGNKFAQMRYSLRLLRAVVYLEDETVNKDLCEKGTIQQMIGIFKNIISKPNEKEEAIVLEIQSDILLILSGLCENHIQRKEIFGTEGVDIVLHVMKTDPRKLQSGLGYNVLLFSTLDSIWCCILGCYPSEDYFLEKEGIFLLLDLLALNQKKFCNLILGIMVEFCDNPKTAAHVNAWQGKKDQTAASLLIKLWRKEEKELGVKRDKNGKIIDTKKPLFTSFQEEQKIIPLPANCPSIAVMDVSENIRAKIYAILGKLDFENLPGLSAEDFVTLCIIHRYLDFKIGEIWNEIYEEIKLEKLRPVTTDKKALEAITTASENIGKMVASLQSDIIESQACQDMQNEQKVYAKIQATHKQRELANKSWEDFLARTSNAKTLKKAKSLQEKAIEASRYHKRPQNAIFHQTHIKGLNTTVPSGGVVTVESTPARLVGGPLVDTDIALKKLPIRGGALQRVKAVKIVDAPKKSIPT.

Over residues 1 to 14 the composition is skewed to low complexity; sequence MWTEEAGATAEAQE. The interval 1-26 is disordered; sequence MWTEEAGATAEAQESGIRNKSSSSSQ. Positions 16-26 are enriched in polar residues; that stretch reads GIRNKSSSSSQ.

As to expression, highly expressed in the testis, specifically in sperm (at protein level). Expressed in the brain, kidney, liver, lung, and intestine.

It localises to the cell projection. Its subcellular location is the cilium. It is found in the flagellum. Cilium- and flagellum-associated protein. In the olfactory epithelium, regulates the speed of activation and termination of the odor response and thus contributes to the robustness of olfactory transduction pathways. Required for sperm flagellum assembly and stability. This Homo sapiens (Human) protein is Cilia- and flagella-associated protein 69.